The sequence spans 454 residues: Bifunctional protein GlmU (454 aa).

Residues M1 to R232 form a pyrophosphorylase region. UDP-N-acetyl-alpha-D-glucosamine-binding positions include L11–G14, K25, Q78, and G83–T84. Residue D108 participates in Mg(2+) binding. UDP-N-acetyl-alpha-D-glucosamine is bound by residues G144, E158, N173, and N230. Mg(2+) is bound at residue N230. The interval V233 to A253 is linker. The segment at G254–K454 is N-acetyltransferase. UDP-N-acetyl-alpha-D-glucosamine contacts are provided by R319 and K337. H349 acts as the Proton acceptor in catalysis. UDP-N-acetyl-alpha-D-glucosamine contacts are provided by Y352 and N363. Acetyl-CoA contacts are provided by residues A366, N372–Y373, S391, S409, and R426.

It in the N-terminal section; belongs to the N-acetylglucosamine-1-phosphate uridyltransferase family. The protein in the C-terminal section; belongs to the transferase hexapeptide repeat family. In terms of assembly, homotrimer. Mg(2+) serves as cofactor.

The protein resides in the cytoplasm. It carries out the reaction alpha-D-glucosamine 1-phosphate + acetyl-CoA = N-acetyl-alpha-D-glucosamine 1-phosphate + CoA + H(+). The enzyme catalyses N-acetyl-alpha-D-glucosamine 1-phosphate + UTP + H(+) = UDP-N-acetyl-alpha-D-glucosamine + diphosphate. It functions in the pathway nucleotide-sugar biosynthesis; UDP-N-acetyl-alpha-D-glucosamine biosynthesis; N-acetyl-alpha-D-glucosamine 1-phosphate from alpha-D-glucosamine 6-phosphate (route II): step 2/2. The protein operates within nucleotide-sugar biosynthesis; UDP-N-acetyl-alpha-D-glucosamine biosynthesis; UDP-N-acetyl-alpha-D-glucosamine from N-acetyl-alpha-D-glucosamine 1-phosphate: step 1/1. Its pathway is bacterial outer membrane biogenesis; LPS lipid A biosynthesis. Catalyzes the last two sequential reactions in the de novo biosynthetic pathway for UDP-N-acetylglucosamine (UDP-GlcNAc). The C-terminal domain catalyzes the transfer of acetyl group from acetyl coenzyme A to glucosamine-1-phosphate (GlcN-1-P) to produce N-acetylglucosamine-1-phosphate (GlcNAc-1-P), which is converted into UDP-GlcNAc by the transfer of uridine 5-monophosphate (from uridine 5-triphosphate), a reaction catalyzed by the N-terminal domain. This Brucella anthropi (strain ATCC 49188 / DSM 6882 / CCUG 24695 / JCM 21032 / LMG 3331 / NBRC 15819 / NCTC 12168 / Alc 37) (Ochrobactrum anthropi) protein is Bifunctional protein GlmU.